Here is a 506-residue protein sequence, read N- to C-terminus: ATP synthase subunit alpha (506 aa).

170–177 contacts ATP; the sequence is GDRQTGKT.

It belongs to the ATPase alpha/beta chains family. In terms of assembly, F-type ATPases have 2 components, CF(1) - the catalytic core - and CF(0) - the membrane proton channel. CF(1) has five subunits: alpha(3), beta(3), gamma(1), delta(1), epsilon(1). CF(0) has four main subunits: a(1), b(1), b'(1) and c(9-12).

It localises to the cellular thylakoid membrane. It catalyses the reaction ATP + H2O + 4 H(+)(in) = ADP + phosphate + 5 H(+)(out). In terms of biological role, produces ATP from ADP in the presence of a proton gradient across the membrane. The alpha chain is a regulatory subunit. This chain is ATP synthase subunit alpha, found in Synechococcus sp. (strain CC9311).